The following is a 209-amino-acid chain: Ribosomal RNA large subunit methyltransferase E (209 aa).

Gly63, Trp65, Asp83, Asp99, and Asp124 together coordinate S-adenosyl-L-methionine. Lys164 acts as the Proton acceptor in catalysis.

It belongs to the class I-like SAM-binding methyltransferase superfamily. RNA methyltransferase RlmE family.

Its subcellular location is the cytoplasm. It catalyses the reaction uridine(2552) in 23S rRNA + S-adenosyl-L-methionine = 2'-O-methyluridine(2552) in 23S rRNA + S-adenosyl-L-homocysteine + H(+). In terms of biological role, specifically methylates the uridine in position 2552 of 23S rRNA at the 2'-O position of the ribose in the fully assembled 50S ribosomal subunit. The sequence is that of Ribosomal RNA large subunit methyltransferase E from Photobacterium profundum (strain SS9).